The chain runs to 456 residues: tRNA-2-methylthio-N(6)-dimethylallyladenosine synthase (456 aa).

The MTTase N-terminal domain maps to 6–125 (KRLFIKTYGC…LPELIAQAHR (120 aa)). [4Fe-4S] cluster contacts are provided by C15, C51, C88, C163, C167, and C170. Residues 149–385 (QVEGYSAFVT…QELLSDQQAA (237 aa)) enclose the Radical SAM core domain. The TRAM domain maps to 388–450 (ESMIGRTLPV…RNSLSGSLTG (63 aa)).

Belongs to the methylthiotransferase family. MiaB subfamily. As to quaternary structure, monomer. It depends on [4Fe-4S] cluster as a cofactor.

The protein localises to the cytoplasm. The enzyme catalyses N(6)-dimethylallyladenosine(37) in tRNA + (sulfur carrier)-SH + AH2 + 2 S-adenosyl-L-methionine = 2-methylsulfanyl-N(6)-dimethylallyladenosine(37) in tRNA + (sulfur carrier)-H + 5'-deoxyadenosine + L-methionine + A + S-adenosyl-L-homocysteine + 2 H(+). In terms of biological role, catalyzes the methylthiolation of N6-(dimethylallyl)adenosine (i(6)A), leading to the formation of 2-methylthio-N6-(dimethylallyl)adenosine (ms(2)i(6)A) at position 37 in tRNAs that read codons beginning with uridine. The sequence is that of tRNA-2-methylthio-N(6)-dimethylallyladenosine synthase from Maricaulis maris (strain MCS10) (Caulobacter maris).